A 339-amino-acid polypeptide reads, in one-letter code: Glycerol-3-phosphate dehydrogenase [NAD(P)+] (339 aa).

S15, Y16, H36, and K110 together coordinate NADPH. Sn-glycerol 3-phosphate is bound by residues K110, G139, and T141. Position 143 (A143) interacts with NADPH. 5 residues coordinate sn-glycerol 3-phosphate: K195, D248, S258, R259, and N260. The active-site Proton acceptor is K195. An NADPH-binding site is contributed by R259. NADPH contacts are provided by V283 and E285.

It belongs to the NAD-dependent glycerol-3-phosphate dehydrogenase family.

It is found in the cytoplasm. The catalysed reaction is sn-glycerol 3-phosphate + NAD(+) = dihydroxyacetone phosphate + NADH + H(+). It carries out the reaction sn-glycerol 3-phosphate + NADP(+) = dihydroxyacetone phosphate + NADPH + H(+). The protein operates within membrane lipid metabolism; glycerophospholipid metabolism. Functionally, catalyzes the reduction of the glycolytic intermediate dihydroxyacetone phosphate (DHAP) to sn-glycerol 3-phosphate (G3P), the key precursor for phospholipid synthesis. The protein is Glycerol-3-phosphate dehydrogenase [NAD(P)+] of Shigella dysenteriae serotype 1 (strain Sd197).